The chain runs to 349 residues: Fructose-1,6-bisphosphatase class 1 (349 aa).

4 residues coordinate Mg(2+): Glu-91, Asp-110, Leu-112, and Asp-113. Substrate is bound by residues 113–116 (DGSS) and Asn-205. Glu-277 lines the Mg(2+) pocket.

The protein belongs to the FBPase class 1 family. In terms of assembly, homotetramer. It depends on Mg(2+) as a cofactor.

The protein resides in the cytoplasm. It catalyses the reaction beta-D-fructose 1,6-bisphosphate + H2O = beta-D-fructose 6-phosphate + phosphate. Its pathway is carbohydrate biosynthesis; gluconeogenesis. The polypeptide is Fructose-1,6-bisphosphatase class 1 (Sinorhizobium medicae (strain WSM419) (Ensifer medicae)).